The following is a 313-amino-acid chain: Ribosomal protein L11 methyltransferase (313 aa).

S-adenosyl-L-methionine-binding residues include T164, G185, D207, and N249.

The protein belongs to the methyltransferase superfamily. PrmA family.

The protein resides in the cytoplasm. It catalyses the reaction L-lysyl-[protein] + 3 S-adenosyl-L-methionine = N(6),N(6),N(6)-trimethyl-L-lysyl-[protein] + 3 S-adenosyl-L-homocysteine + 3 H(+). Its function is as follows. Methylates ribosomal protein L11. The sequence is that of Ribosomal protein L11 methyltransferase from Clostridium botulinum (strain Eklund 17B / Type B).